We begin with the raw amino-acid sequence, 60 residues long: Cytotoxin 5 (60 aa).

4 disulfide bridges follow: Cys3–Cys21, Cys14–Cys38, Cys42–Cys53, and Cys54–Cys59.

The protein belongs to the three-finger toxin family. Short-chain subfamily. Type IA cytotoxin sub-subfamily. Monomer in solution; Homodimer and oligomer in the presence of negatively charged lipids forming a pore with a size ranging between 20 and 30 Angstroms. In terms of tissue distribution, expressed by the venom gland.

It is found in the secreted. It localises to the target cell membrane. Shows cytolytic activity on many different cells by forming pore in lipid membranes. In vivo, increases heart rate or kills the animal by cardiac arrest. In addition, it binds to heparin with high affinity, interacts with Kv channel-interacting protein 1 (KCNIP1) in a calcium-independent manner, and binds to integrin alpha-V/beta-3 (ITGAV/ITGB3) with moderate affinity. The polypeptide is Cytotoxin 5 (Naja kaouthia (Monocled cobra)).